A 483-amino-acid chain; its full sequence is Cyclic AMP-dependent transcription factor ATF-7 (483 aa).

Residues 1–285 form a transactivation domain region; it reads MGDDRPFVCN…GMVVGSASTM (285 aa). The segment at 7–31 adopts a C2H2-type zinc-finger fold; sequence FVCNAPGCGQRFTNEDHLAVHKHKH. Thr51 carries the post-translational modification Phosphothreonine; by MAPK11. Residues Thr53 and Thr101 each carry the phosphothreonine modification. Lys107 is covalently cross-linked (Glycyl lysine isopeptide (Lys-Gly) (interchain with G-Cter in SUMO1)). Disordered regions lie at residues 110–148 and 299–345; these read EPVE…TPTP and HPDA…NRAA. Composition is skewed to low complexity over residues 114-126 and 307-320; these read VDSS…ASSP and QPQV…PSTG. Over residues 326–343 the composition is skewed to basic and acidic residues; that stretch reads TVDEDPDERRQRFLERNR. The 64-residue stretch at 332–395 folds into the bZIP domain; sequence DERRQRFLER…AQLKQLLLAH (64 aa). Residues 334–354 are basic motif; sequence RRQRFLERNRAAASRCRQKRK. The segment at 360-388 is leucine-zipper; the sequence is LEKKAEELTSQNIQLSNEVTLLRNEVAQL. Disordered regions lie at residues 407-440 and 464-483; these read TQGY…SNGL and LSMP…SAGR. 2 positions are modified to phosphoserine: Ser413 and Ser423. The segment covering 429–440 has biased composition (polar residues); it reads QHSSATAPSNGL.

This sequence belongs to the bZIP family. As to quaternary structure, homodimer; binds DNA as homodimer. Heterodimer; heterodimerizes with other members of ATF family and with JUN family members. Interacts with JNK2; the interaction does not phosphorylate ATF7 but acts as a docking site for other ATF-associated partners such as JUN family members. Interacts (via its transactivation domain) with TAF12 (isoforms TAFII15 and TAFII20); the interaction potentiates the transactivation activity (isoform TAFII20 only) and is inhibited by ATF7 sumoylation. Interacts with TAF4; the interaction inhibits the TAF12-dependent transactivation. Interacts with MAPK9; the interaction does not phosphorylate ATF7 but acts as a docking site for ATF7-associated partners such as JUN. Interacts with Ku complex components XRCC6 and XRCC7. Interacts with TERT. Post-translationally, on EGF stimulation, phosphorylated first on Thr-53 allowing subsequent phosphorylation on Thr-51. This latter phosphorylation prevents sumoylation, increases binding to TAF12 and enhances transcriptional activity. Social isolation stress as well as TNF-alpha also induce the phosphorylation of ATF7. Phosphorylated in proliferating colonic and small intestinal epithelial cells. In terms of processing, sumoylation delays nuclear localization and inhibits transactivation activity through preventing binding to TAF12. RANBP2 appears to be the specific E3 ligase.

It localises to the nucleus. The protein localises to the nucleoplasm. Its subcellular location is the chromosome. It is found in the telomere. Functionally, stress-responsive chromatin regulator that plays a role in various biological processes including innate immunological memory, adipocyte differentiation or telomerase regulation. In absence of stress, contributes to the formation of heterochromatin and heterochromatin-like structure by recruiting histone H3K9 tri- and di-methyltransferases thus silencing the transcription of target genes such as STAT1 in adipocytes, or genes involved in innate immunity in macrophages and adipocytes. Stress induces ATF7 phosphorylation that disrupts interactions with histone methyltransferase and enhances the association with coactivators containing histone acetyltransferase and/or histone demethylase, leading to disruption of the heterochromatin-like structure and subsequently transcriptional activation. In response to TNF-alpha, which is induced by various stresses, phosphorylated ATF7 and telomerase are released from telomeres leading to telomere shortening. Plays also a role in maintaining epithelial regenerative capacity and protecting against cell death during intestinal epithelial damage and repair. This is Cyclic AMP-dependent transcription factor ATF-7 (ATF7) from Pongo abelii (Sumatran orangutan).